Reading from the N-terminus, the 458-residue chain is Ectonucleotide pyrophosphatase/phosphodiesterase family member 7 (458 aa).

Residues 1-21 (MRGPAVLLTVALATLLAPGAG) form the signal peptide. Residues 22 to 433 (APVQSQGSQN…RPTLLPKGRS (412 aa)) lie on the Extracellular side of the membrane. Zn(2+) contacts are provided by aspartate 39 and threonine 75. Positions 72–78 (VTMTSPC) are required for enzyme activity. The Nucleophile role is filled by threonine 75. Asparagine 96 lines the substrate pocket. N-linked (GlcNAc...) asparagine glycosylation is found at asparagine 100, asparagine 121, asparagine 146, and asparagine 168. Aspartate 199, histidine 203, aspartate 246, and histidine 247 together coordinate Zn(2+). Asparagine 267 carries N-linked (GlcNAc...) asparagine glycosylation. Histidine 353 serves as a coordination point for Zn(2+). Residues 434–454 (ALPPSSRPLLVMGLLGTVILL) form a helical membrane-spanning segment. Topologically, residues 455–458 (SEVA) are cytoplasmic.

The protein belongs to the nucleotide pyrophosphatase/phosphodiesterase family. It depends on Zn(2+) as a cofactor. Post-translationally, N-glycosylated; required for activity and transport to the plasma membrane. In terms of tissue distribution, detected in the colon (at protein level). Expressed in the duodenum, jejunum and liver and at low levels in the ileum. Expression was very low in the esophagus, stomach and colon.

The protein resides in the cell membrane. The enzyme catalyses a sphingomyelin + H2O = phosphocholine + an N-acylsphing-4-enine + H(+). It catalyses the reaction 1-hexadecanoyl-sn-glycero-3-phosphocholine + H2O = 1-hexadecanoyl-sn-glycerol + phosphocholine + H(+). The catalysed reaction is a 1-O-alkyl-2-acetyl-sn-glycero-3-phosphocholine + H2O = a 1-O-alkyl-2-acetyl-sn-glycerol + phosphocholine + H(+). It carries out the reaction 1-O-octadecyl-2-acetyl-sn-glycero-3-phosphocholine + H2O = 1-O-octadecyl-2-acetyl-sn-glycerol + phosphocholine + H(+). Inhibited in a dose dependent manner by ATP, imidazole, orthovanadate and zinc ion. Not inhibited by ADP, AMP and EDTA. In terms of biological role, choline-specific phosphodiesterase that hydrolyzes sphingomyelin releasing the ceramide and phosphocholine and therefore is involved in sphingomyelin digestion, ceramide formation, and fatty acid (FA) absorption in the gastrointestinal tract. Also has phospholipase C activity and can also cleave phosphocholine from palmitoyl lyso-phosphatidylcholine and platelet-activating factor (PAF) leading to its inactivation. Does not have nucleotide pyrophosphatase activity. May promote cholesterol absorption by affecting the levels of sphingomyelin derived from either diet or endogenous sources, in the intestinal lumen. The protein is Ectonucleotide pyrophosphatase/phosphodiesterase family member 7 of Homo sapiens (Human).